We begin with the raw amino-acid sequence, 376 residues long: MGIEFKRSPRPTLGVEWEIALVDPETRDLAPRAAEILEIVAKNHPEVHLEREFLQNTVELVTGVCDTVPEAVAELSHDLDALKEAADSLGLRLWTSGSHPFSDFRENPVSEKGSYDEIIARTQYWGNQMLIWGIHVHVGISHEDRVWPIINALLTNYPHLLALSASSPAWDGLDTGYASNRTMLYQQLPTAGLPYQFQSWDEWCSYMADQDKSGVINHTGSMHFDIRPASKWGTIEVRVADSTSNLRELSAIVALTHCLVVHYDRMIDAGEELPSLQQWHVSENKWRAARYGLDAEIIISRDTDEAMVQDELRRLVAQLMPLANELGCARELELVLEILERGGGYERQRRVFKETGSWKAAVDLACDELNDLKALD.

The protein belongs to the glutamate--cysteine ligase type 2 family. YbdK subfamily.

The catalysed reaction is L-cysteine + L-glutamate + ATP = gamma-L-glutamyl-L-cysteine + ADP + phosphate + H(+). Functionally, ATP-dependent carboxylate-amine ligase which exhibits weak glutamate--cysteine ligase activity. In Corynebacterium glutamicum (strain R), this protein is Putative glutamate--cysteine ligase 2.